The following is a 382-amino-acid chain: MTHKKQKKEMSDSEKKTFNEDSKHSILAVDLVRLILERLSFVDFHRARCVSSIWYIASKTVIGVTNPTTPWLILFPKGDVEIKKDSCKLYDPHENKTYIVRDLGFDLVTSRCLASSGSWFLMLDHRTEFHLLNLFTRVRIPLPSLESTRGSDIKIGNAVLWVDEQRKDYLVVWNISSLFGYHKKGDDRWKVFKPLENERCIIAMVFKENKLYVLSVDGNVDVFYFSGNDSPVRCATLPSSPLRKGHKVVVTLSGEVLIIVAKVEPYPRTRLCFFAVYKMDPKSSRWETIKSLAGEALILDLGITVEAKVMKNCIYFSNDQFHRYNENSLWNVSNKSGVFVYHFRSANVVQLVELLTASSRTSKILFKDARCFFPTFTSKWLL.

The 48-residue stretch at 22-69 (SKHSILAVDLVRLILERLSFVDFHRARCVSSIWYIASKTVIGVTNPTT) folds into the F-box domain. Kelch repeat units lie at residues 73 to 117 (ILFP…ASSG), 159 to 209 (VLWV…FKEN), and 259 to 306 (IVAK…ITVE).

In terms of assembly, part of a SCF (SKP1-cullin-F-box) protein ligase complex. Binds directly to several GSK3 family proteins such as SKP1A/ASK1, ASK1/SK11, ASK3/SK12, ASK5/SK13, ASK7/BIN2/SK21, ASK9/SK22 and ASK6/SK23. Interacts with ASK7/BIN2/SK21 in a brassinosteroid (BR)-dependent manner. Expressed in seedlings, leaves, stems, flower buds and flowers.

It is found in the cytoplasm. The protein resides in the nucleus. The protein localises to the nucleolus. Component of SCF(ASK-cullin-F-box) E3 ubiquitin ligase complexes, which may mediate the ubiquitination and subsequent proteasomal degradation of target proteins. Required for brassinosteroid (BR) signal transduction. Mediates ASK7/BIN2/SK21 inactivation both by competing with substrate binding (e.g. BZR1) and by promoting its ubiquitination and subsequent proteasomal degradation. The chain is F-box/kelch-repeat protein KIB1 from Arabidopsis thaliana (Mouse-ear cress).